Here is a 503-residue protein sequence, read N- to C-terminus: tRNA-guanine(15) transglycosylase (503 aa).

Catalysis depends on aspartate 86, which acts as the Nucleophile. Aspartate 121 is a binding site for substrate. Cysteine 278, cysteine 280, and cysteine 283 together coordinate Zn(2+).

This sequence belongs to the archaeosine tRNA-ribosyltransferase family. It depends on Zn(2+) as a cofactor.

It carries out the reaction guanosine(15) in tRNA + 7-cyano-7-deazaguanine = 7-cyano-7-carbaguanosine(15) in tRNA + guanine. The protein operates within tRNA modification; archaeosine-tRNA biosynthesis. Functionally, exchanges the guanine residue with 7-cyano-7-deazaguanine (preQ0) at position 15 in the dihydrouridine loop (D-loop) of archaeal tRNAs. This chain is tRNA-guanine(15) transglycosylase, found in Saccharolobus solfataricus (strain ATCC 35092 / DSM 1617 / JCM 11322 / P2) (Sulfolobus solfataricus).